Here is a 41-residue protein sequence, read N- to C-terminus: Large ribosomal subunit protein bL36 (41 aa).

This sequence belongs to the bacterial ribosomal protein bL36 family.

The protein is Large ribosomal subunit protein bL36 of Gluconacetobacter diazotrophicus (strain ATCC 49037 / DSM 5601 / CCUG 37298 / CIP 103539 / LMG 7603 / PAl5).